The primary structure comprises 271 residues: MANFTAADVKRLRELTGAGMLACKNALAESDGDFDKAVEALRIKGAKDVGKRAERATAEGLVAAKDGALIELNCETDFVAKNAEFQKLADDIVAAAVASKAADVDALKAASIGGQTVEEAIGALSAKIGEKLELRRVAIFGGTVETYLHRRAADLPPAVGVLVEYTGAGAEAAHAVALQIAALKARYLSREDVPEDLVASERRIAEETAKEEGKPEQALPKIVEGRLNGFFKDAVLLEQPSVSDSKKSVKALLDDAGVTVTQFVRFEVGQA.

The segment at 76 to 79 is involved in Mg(2+) ion dislocation from EF-Tu; that stretch reads TDFV.

The protein belongs to the EF-Ts family.

The protein localises to the cytoplasm. Its function is as follows. Associates with the EF-Tu.GDP complex and induces the exchange of GDP to GTP. It remains bound to the aminoacyl-tRNA.EF-Tu.GTP complex up to the GTP hydrolysis stage on the ribosome. The sequence is that of Elongation factor Ts from Mycobacterium ulcerans (strain Agy99).